Here is a 344-residue protein sequence, read N- to C-terminus: uncharacterized protein (344 aa).

The N-terminal stretch at 1–27 (MKKWLIIAVSLAIAIVLFMYTKGEAKA) is a signal peptide. A GH18 domain is found at 29–344 (GMTVGYTTGD…FWKAIRKGTK (316 aa)). The active-site Proton donor is glutamate 140.

The protein belongs to the glycosyl hydrolase 18 family.

This is an uncharacterized protein from Bacillus subtilis (strain 168).